The chain runs to 125 residues: Cysteine proteinase inhibitor 3 (125 aa).

An N-terminal signal peptide occupies residues Met1 to Cys22. Residues Gly36 to Ser124 enclose the Cystatin domain. A Secondary area of contact motif is present at residues Gln80–Gly84.

This sequence belongs to the cystatin family. Phytocystatin subfamily.

The protein localises to the secreted. Its function is as follows. Specific inhibitor of cysteine proteinases. Probably involved in the regulation of endogenous processes and in defense against pests and pathogens. This chain is Cysteine proteinase inhibitor 3 (CYS3), found in Arabidopsis thaliana (Mouse-ear cress).